A 423-amino-acid polypeptide reads, in one-letter code: Lipoyl synthase 1, mitochondrial (423 aa).

The [4Fe-4S] cluster site is built by Cys-127, Cys-132, Cys-138, Cys-159, Cys-163, Cys-166, and Ser-375. Positions Asp-142–Leu-364 constitute a Radical SAM core domain.

The protein belongs to the radical SAM superfamily. Lipoyl synthase family. The cofactor is [4Fe-4S] cluster.

It is found in the mitochondrion. The enzyme catalyses [[Fe-S] cluster scaffold protein carrying a second [4Fe-4S](2+) cluster] + N(6)-octanoyl-L-lysyl-[protein] + 2 oxidized [2Fe-2S]-[ferredoxin] + 2 S-adenosyl-L-methionine + 4 H(+) = [[Fe-S] cluster scaffold protein] + N(6)-[(R)-dihydrolipoyl]-L-lysyl-[protein] + 4 Fe(3+) + 2 hydrogen sulfide + 2 5'-deoxyadenosine + 2 L-methionine + 2 reduced [2Fe-2S]-[ferredoxin]. It participates in protein modification; protein lipoylation via endogenous pathway; protein N(6)-(lipoyl)lysine from octanoyl-[acyl-carrier-protein]: step 2/2. Catalyzes the radical-mediated insertion of two sulfur atoms into the C-6 and C-8 positions of the octanoyl moiety bound to the lipoyl domains of lipoate-dependent enzymes, thereby converting the octanoylated domains into lipoylated derivatives. The protein is Lipoyl synthase 1, mitochondrial of Trypanosoma cruzi (strain CL Brener).